A 139-amino-acid chain; its full sequence is AP-4 complex subunit sigma (139 aa).

It belongs to the adaptor complexes small subunit family. May be part of the adaptor protein complex 4 (AP-4), a heterotetramer composed of two large adaptins (epsilon-type subunitand beta-type subunit), a medium adaptin (mu-type subunit) and a small adaptin (sigma-type).

Its subcellular location is the golgi apparatus. The protein resides in the trans-Golgi network membrane. Probable component of an adaptor protein complex. Adaptor protein complexes are vesicle coat components involved both in vesicle formation and cargo selection. They control the vesicular transport of proteins in different trafficking pathways. This Dictyostelium discoideum (Social amoeba) protein is AP-4 complex subunit sigma.